Here is a 206-residue protein sequence, read N- to C-terminus: Thymidylate kinase (206 aa).

Residue Gly11–Thr18 participates in ATP binding.

Belongs to the thymidylate kinase family.

The enzyme catalyses dTMP + ATP = dTDP + ADP. In terms of biological role, phosphorylation of dTMP to form dTDP in both de novo and salvage pathways of dTTP synthesis. This chain is Thymidylate kinase, found in Burkholderia thailandensis (strain ATCC 700388 / DSM 13276 / CCUG 48851 / CIP 106301 / E264).